A 368-amino-acid polypeptide reads, in one-letter code: tRNA-specific 2-thiouridylase MnmA (368 aa).

ATP contacts are provided by residues 11–18 (GMSGGVDS) and methionine 37. Positions 97 to 99 (NPD) are interaction with target base in tRNA. The active-site Nucleophile is the cysteine 102. Cysteine 102 and cysteine 199 form a disulfide bridge. Residue glycine 127 coordinates ATP. The segment at 149-151 (KDQ) is interaction with tRNA. Catalysis depends on cysteine 199, which acts as the Cysteine persulfide intermediate. An interaction with tRNA region spans residues 311–312 (RY).

The protein belongs to the MnmA/TRMU family. Interacts with TusE.

Its subcellular location is the cytoplasm. It carries out the reaction S-sulfanyl-L-cysteinyl-[protein] + uridine(34) in tRNA + AH2 + ATP = 2-thiouridine(34) in tRNA + L-cysteinyl-[protein] + A + AMP + diphosphate + H(+). Catalyzes the 2-thiolation of uridine at the wobble position (U34) of tRNA(Lys), tRNA(Glu) and tRNA(Gln), leading to the formation of s(2)U34, the first step of tRNA-mnm(5)s(2)U34 synthesis. Sulfur is provided by IscS, via a sulfur-relay system. Binds ATP and its substrate tRNAs. The polypeptide is tRNA-specific 2-thiouridylase MnmA (Escherichia coli (strain SMS-3-5 / SECEC)).